The following is a 274-amino-acid chain: Dermonecrotic toxin LcsSicTox-betaIC1 (274 aa).

Residue H5 is part of the active site. Mg(2+) is bound by residues E25 and D27. H41 functions as the Nucleophile in the catalytic mechanism. 2 cysteine pairs are disulfide-bonded: C45–C51 and C47–C190. N-linked (GlcNAc...) asparagine glycosylation occurs at N66. Residue D85 coordinates Mg(2+).

Belongs to the arthropod phospholipase D family. Class II subfamily. The cofactor is Mg(2+). As to expression, expressed by the venom gland.

The protein resides in the secreted. The catalysed reaction is an N-(acyl)-sphingosylphosphocholine = an N-(acyl)-sphingosyl-1,3-cyclic phosphate + choline. The enzyme catalyses an N-(acyl)-sphingosylphosphoethanolamine = an N-(acyl)-sphingosyl-1,3-cyclic phosphate + ethanolamine. It catalyses the reaction a 1-acyl-sn-glycero-3-phosphocholine = a 1-acyl-sn-glycero-2,3-cyclic phosphate + choline. It carries out the reaction a 1-acyl-sn-glycero-3-phosphoethanolamine = a 1-acyl-sn-glycero-2,3-cyclic phosphate + ethanolamine. Dermonecrotic toxins cleave the phosphodiester linkage between the phosphate and headgroup of certain phospholipids (sphingolipid and lysolipid substrates), forming an alcohol (often choline) and a cyclic phosphate. This toxin acts on sphingomyelin (SM). It may also act on ceramide phosphoethanolamine (CPE), lysophosphatidylcholine (LPC) and lysophosphatidylethanolamine (LPE), but not on lysophosphatidylserine (LPS), and lysophosphatidylglycerol (LPG). It acts by transphosphatidylation, releasing exclusively cyclic phosphate products as second products. Induces dermonecrosis, hemolysis, increased vascular permeability, edema, inflammatory response, and platelet aggregation. The protein is Dermonecrotic toxin LcsSicTox-betaIC1 of Loxosceles cf. spinulosa (strain GJB-2008) (Recluse spider).